Consider the following 896-residue polypeptide: Protein translocase subunit SecA (896 aa).

ATP is bound by residues Gln87, Gly105–Thr109, and Asp507. A disordered region spans residues Glu853–Pro879. A compositionally biased stretch (basic and acidic residues) spans Thr866–Arg876. Zn(2+) is bound by residues Cys880, Cys882, Cys891, and His892.

It belongs to the SecA family. In terms of assembly, monomer and homodimer. Part of the essential Sec protein translocation apparatus which comprises SecA, SecYEG and auxiliary proteins SecDF-YajC and YidC. Requires Zn(2+) as cofactor.

The protein resides in the cell inner membrane. It is found in the cytoplasm. It carries out the reaction ATP + H2O + cellular proteinSide 1 = ADP + phosphate + cellular proteinSide 2.. In terms of biological role, part of the Sec protein translocase complex. Interacts with the SecYEG preprotein conducting channel. Has a central role in coupling the hydrolysis of ATP to the transfer of proteins into and across the cell membrane, serving both as a receptor for the preprotein-SecB complex and as an ATP-driven molecular motor driving the stepwise translocation of polypeptide chains across the membrane. This is Protein translocase subunit SecA from Legionella pneumophila subsp. pneumophila (strain Philadelphia 1 / ATCC 33152 / DSM 7513).